Here is a 166-residue protein sequence, read N- to C-terminus: MQFMFAALKLELGDTLYYLLIFAALLLLVKHFAWGPVTKMMEERRQKVISDLDQAESDRKKAELLANQREAALKDSKQEATQILSTAKSNAEKTKNNIISQADQEAAAIRKRASEDAAQAKTDALNEARDQVADISVAIAEKVISKNLSAADQKDLVDQFIKGLND.

A helical membrane pass occupies residues 15–37; that stretch reads TLYYLLIFAALLLLVKHFAWGPV.

Belongs to the ATPase B chain family. F-type ATPases have 2 components, F(1) - the catalytic core - and F(0) - the membrane proton channel. F(1) has five subunits: alpha(3), beta(3), gamma(1), delta(1), epsilon(1). F(0) has three main subunits: a(1), b(2) and c(10-14). The alpha and beta chains form an alternating ring which encloses part of the gamma chain. F(1) is attached to F(0) by a central stalk formed by the gamma and epsilon chains, while a peripheral stalk is formed by the delta and b chains.

Its subcellular location is the cell membrane. Its function is as follows. F(1)F(0) ATP synthase produces ATP from ADP in the presence of a proton or sodium gradient. F-type ATPases consist of two structural domains, F(1) containing the extramembraneous catalytic core and F(0) containing the membrane proton channel, linked together by a central stalk and a peripheral stalk. During catalysis, ATP synthesis in the catalytic domain of F(1) is coupled via a rotary mechanism of the central stalk subunits to proton translocation. Functionally, component of the F(0) channel, it forms part of the peripheral stalk, linking F(1) to F(0). In Lactobacillus johnsonii (strain CNCM I-12250 / La1 / NCC 533), this protein is ATP synthase subunit b.